The primary structure comprises 192 residues: Adenylate kinase (192 aa).

10 to 18 (GVPGVGGTT) provides a ligand contact to ATP.

Belongs to the archaeal adenylate kinase family. Monomer.

Its subcellular location is the cytoplasm. The enzyme catalyses AMP + ATP = 2 ADP. The chain is Adenylate kinase from Methanococcus maripaludis (strain C5 / ATCC BAA-1333).